A 195-amino-acid chain; its full sequence is Penicillin-binding protein activator LpoB (195 aa).

The signal sequence occupies residues 1 to 16; that stretch reads MKKYLFVALAALVLTG. The N-palmitoyl cysteine moiety is linked to residue Cys-17. The S-diacylglycerol cysteine moiety is linked to residue Cys-17. The disordered stretch occupies residues 19–55; that stretch reads SRPPEPEQPQPPVTVEPVTPPVVEEPQPPVTEPVPQP. 2 stretches are compositionally biased toward pro residues: residues 24-38 and 44-55; these read PEQP…PVTP and PQPPVTEPVPQP.

Belongs to the LpoB family. Interacts with PBP1b.

It is found in the cell outer membrane. In terms of biological role, regulator of peptidoglycan synthesis that is essential for the function of penicillin-binding protein 1B (PBP1b). This is Penicillin-binding protein activator LpoB from Serratia proteamaculans (strain 568).